A 358-amino-acid polypeptide reads, in one-letter code: Feruloyl esterase B (358 aa).

A signal peptide spans 1-18 (MAIPLVLLLAWLLPTVFA). Residues 19 to 291 (ASLTQVSNFG…VSVVLDWFGI (273 aa)) form a catalytic region. Catalysis depends on serine 136, which acts as the Charge relay system. 2 N-linked (GlcNAc...) asparagine glycosylation sites follow: asparagine 179 and asparagine 246. The tract at residues 292-321 (TGGGGGNGGGSGSTTTTTSATTTSTGPTGG) is gly/Thr-rich linker. The tract at residues 297–318 (GNGGGSGSTTTTTSATTTSTGP) is disordered. A compositionally biased stretch (low complexity) spans 304 to 318 (STTTTTSATTTSTGP). Residues 322 to 358 (CTAAHWDQCGGNGYTGCTSCASPYTCQKVNDYYSQCL) enclose the CBM1 domain.

Belongs to the carbohydrate esterase 1 (CE1) family. Feruloyl esterase type B subfamily.

Its subcellular location is the secreted. It carries out the reaction feruloyl-polysaccharide + H2O = ferulate + polysaccharide.. In terms of biological role, involved in degradation of plant cell walls. Hydrolyzes the feruloyl-arabinose ester bond in arabinoxylans as well as the feruloyl-galactose and feruloyl-arabinose ester bonds in pectin. Active against methyl esters of caffeate (MCA), but not sinapate (MSA). The chain is Feruloyl esterase B (faeB) from Talaromyces stipitatus (strain ATCC 10500 / CBS 375.48 / QM 6759 / NRRL 1006) (Penicillium stipitatum).